The following is a 1633-amino-acid chain: Laminin-like protein lam-2 (1633 aa).

The N-terminal stretch at 1 to 19 (MTSILWLFSLAVLWHMGQP) is a signal peptide. Residues 47-286 (QPQRCVPDFV…AISDFAVGGR (240 aa)) enclose the Laminin N-terminal domain. Residues asparagine 116 and asparagine 136 are each glycosylated (N-linked (GlcNAc...) asparagine). 16 disulfide bridges follow: cysteine 287/cysteine 296, cysteine 289/cysteine 310, cysteine 312/cysteine 321, cysteine 324/cysteine 344, cysteine 347/cysteine 356, cysteine 349/cysteine 372, cysteine 375/cysteine 384, cysteine 387/cysteine 400, cysteine 403/cysteine 415, cysteine 405/cysteine 421, cysteine 423/cysteine 432, cysteine 435/cysteine 447, cysteine 450/cysteine 464, cysteine 452/cysteine 471, cysteine 473/cysteine 482, and cysteine 485/cysteine 500. Laminin EGF-like domains are found at residues 287–346 (CKCN…ECIA), 347–402 (CNCS…YCVA), 403–449 (CGCN…GCKN), and 450–502 (CGCE…GCTP). N-linked (GlcNAc...) asparagine glycosylation occurs at asparagine 348. In terms of domain architecture, Laminin EGF-like 5; first part spans 503–512 (CFCFGHSSIC). 3 N-linked (GlcNAc...) asparagine glycosylation sites follow: asparagine 522, asparagine 658, and asparagine 740. The Laminin IV type A domain maps to 529-701 (QDKQKWAGQN…NPKQATWIEH (173 aa)). The Laminin EGF-like 5; second part domain maps to 702–747 (CECLPGFVGQFCESCESGFRRETKFGGPFNHCIKCDCHNHSNSCEA). 23 disulfides stabilise this stretch: cysteine 736–cysteine 745, cysteine 738–cysteine 752, cysteine 754–cysteine 763, cysteine 766–cysteine 782, cysteine 785–cysteine 803, cysteine 806–cysteine 815, cysteine 818–cysteine 832, cysteine 835–cysteine 849, cysteine 837–cysteine 856, cysteine 859–cysteine 868, cysteine 871–cysteine 887, cysteine 890–cysteine 909, cysteine 892–cysteine 916, cysteine 918–cysteine 927, cysteine 930–cysteine 943, cysteine 946–cysteine 958, cysteine 948–cysteine 965, cysteine 967–cysteine 976, cysteine 979–cysteine 991, cysteine 994–cysteine 1006, cysteine 996–cysteine 1013, cysteine 1015–cysteine 1024, and cysteine 1027–cysteine 1038. The region spanning 752–784 (CICEHNTAGDTCERCARGYYGDALQGTEEDCQK) is the Laminin EGF-like 6; truncated domain. Laminin EGF-like domains lie at 785-834 (CPCP…ECVE), 835-889 (CACS…NCQS), 890-945 (CGCF…GCQE), 946-993 (CNCD…GCQP), and 994-1040 (CDCE…GCLP). Residue asparagine 936 is glycosylated (N-linked (GlcNAc...) asparagine). Residues asparagine 1077, asparagine 1183, asparagine 1226, asparagine 1259, asparagine 1336, asparagine 1452, and asparagine 1528 are each glycosylated (N-linked (GlcNAc...) asparagine).

In terms of biological role, during the formation of neuromuscular junctions at the larval stage, negatively regulates membrane protrusion from body wall muscles, probably downstream of the integrin complex formed by pat-2 and pat-3. This chain is Laminin-like protein lam-2 (lam-2), found in Caenorhabditis elegans.